Consider the following 148-residue polypeptide: Cathelicidin-1 (148 aa).

Positions 1–17 (MLSCWVLLLALLGGACA) are cleaved as a signal peptide. The propeptide occupies 18 to 122 (LPAPLGYSQA…TCVDSMADPV (105 aa)). 2 cysteine pairs are disulfide-bonded: Cys-75–Cys-86 and Cys-97–Cys-114.

It belongs to the cathelicidin family. As to expression, detected in gizzard, liver, small intestine, large intestine, cloaca, bursa of Fabricius, gall bladder, lung, trachea, kidney, testis and bone marrow.

It localises to the secreted. Its function is as follows. Binds bacterial lipopolysaccharide (LPS). Has potent antimicrobial activity against Gram-positive and Gram-negative bacteria (in vitro). Has hemolytic activity (in vitro). May play a role in the innate immune response. The chain is Cathelicidin-1 (CATHL1) from Gallus gallus (Chicken).